The following is a 245-amino-acid chain: 2,3-bisphosphoglycerate-dependent phosphoglycerate mutase (245 aa).

Substrate is bound by residues 8-15 (RHGQSLWN), 21-22 (TG), arginine 60, 87-90 (ERHY), lysine 98, 114-115 (RR), and 183-184 (GN). Histidine 9 functions as the Tele-phosphohistidine intermediate in the catalytic mechanism. The active-site Proton donor/acceptor is the glutamate 87.

It belongs to the phosphoglycerate mutase family. BPG-dependent PGAM subfamily.

The catalysed reaction is (2R)-2-phosphoglycerate = (2R)-3-phosphoglycerate. It participates in carbohydrate degradation; glycolysis; pyruvate from D-glyceraldehyde 3-phosphate: step 3/5. Catalyzes the interconversion of 2-phosphoglycerate and 3-phosphoglycerate. The protein is 2,3-bisphosphoglycerate-dependent phosphoglycerate mutase of Bacillus cereus (strain G9842).